The following is an 80-amino-acid chain: uncharacterized protein (80 aa).

Residues 12 to 32 (FKIIALILLIVLIINLSYKLF) form a helical membrane-spanning segment.

It is found in the membrane. This is an uncharacterized protein from Saccharomyces cerevisiae (strain ATCC 204508 / S288c) (Baker's yeast).